A 272-amino-acid chain; its full sequence is Eukaryotic translation initiation factor 3 subunit G (272 aa).

2 disordered regions span residues 1-28 (MPAL…PTEI) and 143-187 (AGKA…RGRD). The RRM domain occupies 190–268 (TAIRISNLSE…LILNVEWSKP (79 aa)).

This sequence belongs to the eIF-3 subunit G family. As to quaternary structure, component of the eukaryotic translation initiation factor 3 (eIF-3) complex.

It localises to the cytoplasm. RNA-binding component of the eukaryotic translation initiation factor 3 (eIF-3) complex, which is involved in protein synthesis of a specialized repertoire of mRNAs and, together with other initiation factors, stimulates binding of mRNA and methionyl-tRNAi to the 40S ribosome. The eIF-3 complex specifically targets and initiates translation of a subset of mRNAs involved in cell proliferation. This subunit can bind 18S rRNA. This chain is Eukaryotic translation initiation factor 3 subunit G, found in Culex quinquefasciatus (Southern house mosquito).